We begin with the raw amino-acid sequence, 329 residues long: Sideroflexin-1.1 (329 aa).

5 helical membrane passes run 100–122 (MPGN…GVVF), 150–167 (LFVS…VALG), 178–198 (LAAR…NIPM), 232–254 (VTLS…MNRI), and 274–294 (IQTL…CALF).

This sequence belongs to the sideroflexin family.

Its subcellular location is the mitochondrion inner membrane. The enzyme catalyses L-serine(in) = L-serine(out). It catalyses the reaction L-alanine(in) = L-alanine(out). The catalysed reaction is L-cysteine(in) = L-cysteine(out). In terms of biological role, amino acid transporter importing serine, an essential substrate of the mitochondrial branch of the one-carbon pathway, into mitochondria. Mitochondrial serine is then converted to glycine and formate, which exits to the cytosol where it is used to generate the charged folates that serve as one-carbon donors. May also transport other amino acids including alanine and cysteine. The protein is Sideroflexin-1.1 of Caenorhabditis elegans.